The sequence spans 937 residues: FNIP repeat-containing protein DDB_G0271996 (937 aa).

A compositionally biased stretch (polar residues) spans 1-12; the sequence is MQQPISIQQPVV. The segment at 1–60 is disordered; sequence MQQPISIQQPVVNNINNSPNNQANINNNTTNNTNNNNNNNNTTNNIANNNNSNNINNNNE. Positions 13-60 are enriched in low complexity; that stretch reads NNINNSPNNQANINNNTTNNTNNNNNNNNTTNNIANNNNSNNINNNNE. FNIP repeat units lie at residues 307–350, 354–394, 396–439, and 598–640; these read FNQP…LGQR, PIPI…TLDN, FNQP…FHQN, and YNHQ…RVKS. A coiled-coil region spans residues 677–769; the sequence is VEQQAQYAQQ…EEEDTNNHQH (93 aa). Residues 719–729 show a composition bias toward low complexity; it reads KQQQQQQQDNE. Disordered stretches follow at residues 719-767, 794-823, and 910-937; these read KQQQ…TNNH, SNNS…EEED, and QNQN…NVKK. Residues 751 to 763 are compositionally biased toward acidic residues; the sequence is LEEEQENEEEEED. 2 stretches are compositionally biased toward low complexity: residues 794–814 and 910–929; these read SNNS…NNNS and QNQN…NNNN. Residues 902 to 937 are a coiled coil; the sequence is ICNNINQNQNQNNNNYNNNNNNNNNNNNNKKKNVKK.

The chain is FNIP repeat-containing protein DDB_G0271996 from Dictyostelium discoideum (Social amoeba).